Reading from the N-terminus, the 87-residue chain is Small ribosomal subunit protein bS20 (87 aa).

Positions M1–R25 are disordered. Residues A7–R20 show a composition bias toward basic residues.

This sequence belongs to the bacterial ribosomal protein bS20 family.

Its function is as follows. Binds directly to 16S ribosomal RNA. The sequence is that of Small ribosomal subunit protein bS20 from Nitrosospira multiformis (strain ATCC 25196 / NCIMB 11849 / C 71).